Here is a 161-residue protein sequence, read N- to C-terminus: Cyclic pyranopterin monophosphate synthase (161 aa).

Substrate-binding positions include 75–77 (LCH) and 113–114 (ME). The active site involves D128.

The protein belongs to the MoaC family. Homohexamer; trimer of dimers.

The enzyme catalyses (8S)-3',8-cyclo-7,8-dihydroguanosine 5'-triphosphate = cyclic pyranopterin phosphate + diphosphate. Its pathway is cofactor biosynthesis; molybdopterin biosynthesis. Catalyzes the conversion of (8S)-3',8-cyclo-7,8-dihydroguanosine 5'-triphosphate to cyclic pyranopterin monophosphate (cPMP). The polypeptide is Cyclic pyranopterin monophosphate synthase (Salmonella dublin (strain CT_02021853)).